Here is a 1482-residue protein sequence, read N- to C-terminus: Chromosome partition protein MukB (1482 aa).

ATP is bound at residue 34–41 (GGNGAGKS). Coiled-coil stretches lie at residues 326-416 (LEAD…AIQY), 509-603 (RHLA…RAPV), 780-805 (RAARENRIESLHAERETLSERFATLS), 835-923 (EAEI…AKLE), 979-1116 (LSGN…AKAG), and 1210-1265 (EAIE…LQSV). Residues 666–783 (PGGAEDSRLN…TLPLFGRAAR (118 aa)) are flexible hinge.

This sequence belongs to the SMC family. MukB subfamily. In terms of assembly, homodimerization via its hinge domain. Binds to DNA via its C-terminal region. Interacts, and probably forms a ternary complex, with MukE and MukF via its C-terminal region. The complex formation is stimulated by calcium or magnesium. Interacts with tubulin-related protein FtsZ.

The protein resides in the cytoplasm. It localises to the nucleoid. Its function is as follows. Plays a central role in chromosome condensation, segregation and cell cycle progression. Functions as a homodimer, which is essential for chromosome partition. Involved in negative DNA supercoiling in vivo, and by this means organize and compact chromosomes. May achieve or facilitate chromosome segregation by condensation DNA from both sides of a centrally located replisome during cell division. This chain is Chromosome partition protein MukB, found in Enterobacter sp. (strain 638).